The chain runs to 278 residues: Transmembrane protein 45B (278 aa).

The next 7 helical transmembrane spans lie at 7 to 27 (HALPGSFFLIFGLWWSVKYPL), 49 to 69 (IIEGAVKALFAVIGILAEQFV), 95 to 115 (YLFFGVSGIIDMLTYLYFNIV), 117 to 137 (LGLDRVVLAMAVFVEGFLFYF), 149 to 169 (IHSLLLFSLFGATISICLEVI), 183 to 203 (LLILQGTWFWQIGFVLFPPFG), and 215 to 235 (VMFITMCFCWHYLVALCITAI). Residues serine 273 and serine 275 each carry the phosphoserine modification.

The protein belongs to the TMEM45 family.

Its subcellular location is the endosome membrane. The protein localises to the lysosome membrane. It localises to the golgi apparatus. It is found in the trans-Golgi network membrane. Plays a role in innate immunity. This Rattus norvegicus (Rat) protein is Transmembrane protein 45B (Tmem45b).